The sequence spans 375 residues: Tryptophan--tRNA ligase (375 aa).

The 'HIGH' region motif lies at 81-89; the sequence is PSGPVHIGH. Residues 258–262 carry the 'KMSKS' region motif; that stretch reads KMSAS.

Belongs to the class-I aminoacyl-tRNA synthetase family.

Its subcellular location is the cytoplasm. The enzyme catalyses tRNA(Trp) + L-tryptophan + ATP = L-tryptophyl-tRNA(Trp) + AMP + diphosphate + H(+). The polypeptide is Tryptophan--tRNA ligase (Pyrobaculum aerophilum (strain ATCC 51768 / DSM 7523 / JCM 9630 / CIP 104966 / NBRC 100827 / IM2)).